We begin with the raw amino-acid sequence, 156 residues long: Small ribosomal subunit protein uS7 (156 aa).

Belongs to the universal ribosomal protein uS7 family. As to quaternary structure, part of the 30S ribosomal subunit. Contacts proteins S9 and S11.

In terms of biological role, one of the primary rRNA binding proteins, it binds directly to 16S rRNA where it nucleates assembly of the head domain of the 30S subunit. Is located at the subunit interface close to the decoding center, probably blocks exit of the E-site tRNA. This chain is Small ribosomal subunit protein uS7, found in Methylococcus capsulatus (strain ATCC 33009 / NCIMB 11132 / Bath).